The sequence spans 122 residues: UPF0382 membrane protein SAB0533 (122 aa).

The next 4 helical transmembrane spans lie at 3–23 (LFII…AFGA), 46–66 (MYHG…SINV), 69–89 (AGWL…ILVL), and 98–118 (ITPI…IATF).

The protein belongs to the UPF0382 family.

It is found in the cell membrane. The polypeptide is UPF0382 membrane protein SAB0533 (Staphylococcus aureus (strain bovine RF122 / ET3-1)).